Reading from the N-terminus, the 416-residue chain is Secreted RxLR effector protein 25 (416 aa).

A signal peptide spans 1–20 (MRSWLLLLVGLSSYFALSTS). Positions 49–88 (RKLRAPGGDTNTLKDSGKARREKKVWKLFCRVFLQLDDEK) match the RxLR-dEER motif.

Belongs to the RxLR effector family.

It localises to the secreted. It is found in the host cytoplasm. The protein localises to the host nucleus. Effector that partially suppresses the tobacco programmed cell death induced by cell death-inducing proteins. The protein is Secreted RxLR effector protein 25 of Plasmopara viticola (Downy mildew of grapevine).